The primary structure comprises 322 residues: CRISPR-associated endonuclease Cas1 (322 aa).

3 residues coordinate Mn(2+): glutamate 149, histidine 214, and glutamate 229.

This sequence belongs to the CRISPR-associated endonuclease Cas1 family. As to quaternary structure, homodimer, forms a heterotetramer with a Cas2 homodimer. Mg(2+) is required as a cofactor. The cofactor is Mn(2+).

CRISPR (clustered regularly interspaced short palindromic repeat), is an adaptive immune system that provides protection against mobile genetic elements (viruses, transposable elements and conjugative plasmids). CRISPR clusters contain spacers, sequences complementary to antecedent mobile elements, and target invading nucleic acids. CRISPR clusters are transcribed and processed into CRISPR RNA (crRNA). Acts as a dsDNA endonuclease. Involved in the integration of spacer DNA into the CRISPR cassette. This chain is CRISPR-associated endonuclease Cas1, found in Pyrococcus horikoshii (strain ATCC 700860 / DSM 12428 / JCM 9974 / NBRC 100139 / OT-3).